Here is a 387-residue protein sequence, read N- to C-terminus: Formate-dependent phosphoribosylglycinamide formyltransferase (387 aa).

N(1)-(5-phospho-beta-D-ribosyl)glycinamide is bound by residues 15–16 and glutamate 75; that span reads EL. ATP is bound by residues arginine 106, lysine 147, 152–157, 187–190, and glutamate 195; these read SSGKGQ and EEFI. Positions 111 to 301 constitute an ATP-grasp domain; it reads DLASNELNIR…EFELHLRAVL (191 aa). Residues glutamate 260 and glutamate 272 each coordinate Mg(2+). Residues aspartate 279, lysine 349, and 356-357 each bind N(1)-(5-phospho-beta-D-ribosyl)glycinamide; that span reads RR.

This sequence belongs to the PurK/PurT family. As to quaternary structure, homodimer.

The catalysed reaction is N(1)-(5-phospho-beta-D-ribosyl)glycinamide + formate + ATP = N(2)-formyl-N(1)-(5-phospho-beta-D-ribosyl)glycinamide + ADP + phosphate + H(+). It functions in the pathway purine metabolism; IMP biosynthesis via de novo pathway; N(2)-formyl-N(1)-(5-phospho-D-ribosyl)glycinamide from N(1)-(5-phospho-D-ribosyl)glycinamide (formate route): step 1/1. Functionally, involved in the de novo purine biosynthesis. Catalyzes the transfer of formate to 5-phospho-ribosyl-glycinamide (GAR), producing 5-phospho-ribosyl-N-formylglycinamide (FGAR). Formate is provided by PurU via hydrolysis of 10-formyl-tetrahydrofolate. This chain is Formate-dependent phosphoribosylglycinamide formyltransferase, found in Prochlorococcus marinus (strain NATL2A).